We begin with the raw amino-acid sequence, 161 residues long: Regulator of ribonuclease activity A (161 aa).

The protein belongs to the RraA family. As to quaternary structure, homotrimer. Binds to both RNA-binding sites in the C-terminal region of Rne and to RhlB.

Its subcellular location is the cytoplasm. Functionally, globally modulates RNA abundance by binding to RNase E (Rne) and regulating its endonucleolytic activity. Can modulate Rne action in a substrate-dependent manner by altering the composition of the degradosome. Modulates RNA-binding and helicase activities of the degradosome. The protein is Regulator of ribonuclease activity A of Yersinia enterocolitica serotype O:8 / biotype 1B (strain NCTC 13174 / 8081).